A 105-amino-acid polypeptide reads, in one-letter code: uncharacterized protein (105 aa).

The protein to C.jejuni CJ1463.

This is an uncharacterized protein from Helicobacter pylori (strain ATCC 700392 / 26695) (Campylobacter pylori).